We begin with the raw amino-acid sequence, 497 residues long: NAD(P)H-quinone oxidoreductase chain 4, chloroplastic (497 aa).

Transmembrane regions (helical) follow at residues 4–24 (FPWL…IFLF), 35–55 (YTVC…CYHF), 84–104 (GLSI…TLAA), 111–131 (CKLF…PFSS), 134–154 (ILLF…LLAM), 167–187 (FILY…GIGL), 208–228 (ALEI…SPII), 242–262 (HYST…YGLV), 274–294 (SIFC…AASA), 305–325 (IAYS…SISD), 330–350 (GAIL…FLSG), 386–406 (LALP…GIIT), 411–431 (FLIM…LTPI), and 463–483 (FISI…DFIF).

This sequence belongs to the complex I subunit 4 family.

It is found in the plastid. It localises to the chloroplast thylakoid membrane. The enzyme catalyses a plastoquinone + NADH + (n+1) H(+)(in) = a plastoquinol + NAD(+) + n H(+)(out). It carries out the reaction a plastoquinone + NADPH + (n+1) H(+)(in) = a plastoquinol + NADP(+) + n H(+)(out). The sequence is that of NAD(P)H-quinone oxidoreductase chain 4, chloroplastic (ndhD) from Lotus japonicus (Lotus corniculatus var. japonicus).